The primary structure comprises 2603 residues: Ankyrin repeat domain-containing protein 17 (2603 aa).

Met1 bears the N-acetylmethionine mark. Positions 1 to 32 (MEKATVPAAAEGEGSPPAAAAVAAPPAAAAAE) are enriched in low complexity. A disordered region spans residues 1–127 (MEKATVPAAA…DDDEEEEVSE (127 aa)). 2 positions are modified to phosphoserine: Ser15 and Ser42. The span at 68–77 (PHHKAKRNRT) shows a compositional bias: basic residues. Positions 82 to 92 (SSSESSSDSDN) are enriched in low complexity. Residues 93-107 (SGGGGGGGGGGGGGT) are compositionally biased toward gly residues. Residues 112-127 (SEEEEDDDDEEEEVSE) are compositionally biased toward acidic residues. Ser152 carries the phosphoserine modification. 15 ANK repeats span residues 229–258 (SDNR…SVNE), 262–291 (EGES…NVED), 296–325 (GDIT…DVNA), 329–358 (TGNT…SIED), 362–391 (NGHT…GINT), 396–425 (FKES…DQEH), 429–458 (EMHT…QVNM), 462–491 (SFES…SLEE), 495–524 (EGYT…NINA), 529–558 (TQET…DIEL), 559–588 (GCST…NVHA), 592–621 (TGDT…DLEH), 625–654 (GGRT…NVNR), 659–688 (NDHT…DPTH), and 692–721 (DGST…NLLA). Lys314 is covalently cross-linked (Glycyl lysine isopeptide (Lys-Gly) (interchain with G-Cter in SUMO2)). Positions 770-792 (VRSKAASKQKSNSHLPANSQDVQ) are disordered. Positions 775 to 792 (ASKQKSNSHLPANSQDVQ) are enriched in polar residues. Ser799 is subject to Phosphoserine. ANK repeat units follow at residues 1078–1107 (NHDT…SIEH), 1111–1140 (KGFT…DIEA), 1145–1174 (TKDT…NKEH), 1178–1207 (SDYT…EINS), 1213–1242 (LGIS…DINA), 1247–1276 (NRNT…NVEH), 1280–1309 (TGLT…DVNA), 1315–1344 (SRDT…HIDV), 1348–1377 (KGNT…DVDA), and 1381–1410 (RKIT…QFPS). Residues 1438-1522 (VQAKDRQAAE…EKEKLKVEEE (85 aa)) adopt a coiled-coil conformation. Phosphoserine is present on Ser1453. Disordered stretches follow at residues 1475–1496 (AKRE…RKLE) and 1513–1713 (EKEK…PKRE). A compositionally biased stretch (basic residues) spans 1477–1487 (REKRKEKRRKK). Composition is skewed to low complexity over residues 1526–1546 (LTEP…TWTT), 1598–1607 (ESKSSSTSES), and 1616–1636 (SSCS…NHAS). At Ser1631 the chain carries Phosphoserine. Composition is skewed to polar residues over residues 1638 to 1648 (VVTTTMASKKQ) and 1671 to 1699 (LSET…SPNG). Phosphoserine is present on residues Ser1692, Ser1696, and Ser1705. The KH domain occupies 1721–1785 (RRSKKVSVPS…ESTRQATQLI (65 aa)). Arg1870 is modified (asymmetric dimethylarginine). 3 disordered regions span residues 1902–1991 (PRLP…PSVR), 2007–2195 (TTVT…SSSA), and 2269–2327 (VSSQ…YGSV). Composition is skewed to low complexity over residues 1946 to 1989 (SNQN…SSPS) and 2007 to 2024 (TTVT…TNAT). A phosphoserine mark is found at Ser2038, Ser2040, Ser2041, Ser2043, Ser2055, and Ser2063. Composition is skewed to low complexity over residues 2068–2077 (ASASEQEASS), 2087–2108 (RPPH…QQPP), and 2175–2189 (PPSH…TPAP). The span at 2269–2298 (VSSQSTPESMLSGKSSYLPNSDPLHQSDTS) shows a compositional bias: polar residues. The segment covering 2303 to 2313 (FRPPLQRPAPS) has biased composition (pro residues). Ser2373 carries the post-translational modification Phosphoserine. The disordered stretch occupies residues 2378–2447 (LTPCSSASNE…TGTSAPSVIG (70 aa)). The segment covering 2379 to 2391 (TPCSSASNESPAQ) has biased composition (polar residues). Over residues 2392-2411 (SVSSGVRAPSPAPSSVPLGS) the composition is skewed to low complexity. Position 2401 is a phosphoserine (Ser2401). Positions 2435 to 2447 (IRQTGTSAPSVIG) are enriched in polar residues.

As to quaternary structure, interacts (via N-terminus) with NOD2. Interacts with CDK2, MCM3, MCM5, MCM7, CDC6 and PCNA. Interacts with MAVS and IFIH1. Interacts (via the second ankyrin repeat cluster) with RIGI. Post-translationally, phosphorylated by CDK2. As to expression, highly expressed in fetal liver. Detected in adult liver cells, ovarian oocytes, seminiferous tubules of the testes and pelvic region of the kidney. It was not detected in heart, gut, lung, spleen and skeletal muscle. Earliest specific in situ marker of hepatic differentiation during embryogenesis, useful for characterization of inductive events involved in hepatic specification.

The protein resides in the cytoplasm. The protein localises to the nucleus. Could play pivotal roles in cell cycle and DNA regulation. Involved in innate immune defense against viruse by positively regulating the viral dsRNA receptors RIGI and IFIH1 signaling pathways. Involves in NOD2- and NOD1-mediated responses to bacteria suggesting a role in innate antibacterial immune pathways too. Could play a central role for the formation and/or maintenance of the blood vessels of the circulation system. In Mus musculus (Mouse), this protein is Ankyrin repeat domain-containing protein 17 (Ankrd17).